Consider the following 908-residue polypeptide: DNA polymerase I (908 aa).

The 5'-3' exonuclease domain occupies 1 to 318; that stretch reads MKELYLIDAL…DDINTIDTEN (318 aa). In terms of domain architecture, 3'-5' exonuclease spans 319-531; the sequence is VKYRSITTKI…MEENGIYLDK (213 aa). Residues 532-908 are polymerase; the sequence is EYLKEYGKEL…ETGKSWGEIH (377 aa).

Belongs to the DNA polymerase type-A family.

The enzyme catalyses DNA(n) + a 2'-deoxyribonucleoside 5'-triphosphate = DNA(n+1) + diphosphate. In terms of biological role, in addition to polymerase activity, this DNA polymerase exhibits 3'-5' and 5'-3' exonuclease activity. This is DNA polymerase I (polA) from Borreliella burgdorferi (strain ATCC 35210 / DSM 4680 / CIP 102532 / B31) (Borrelia burgdorferi).